We begin with the raw amino-acid sequence, 223 residues long: Small ribosomal subunit protein uS3 (223 aa).

Residues 40–108 (IRELVHRELP…KVHLNIQEIR (69 aa)) form the KH type-2 domain.

The protein belongs to the universal ribosomal protein uS3 family. Part of the 30S ribosomal subunit. Forms a tight complex with proteins S10 and S14.

Functionally, binds the lower part of the 30S subunit head. Binds mRNA in the 70S ribosome, positioning it for translation. The sequence is that of Small ribosomal subunit protein uS3 from Thermomicrobium roseum (strain ATCC 27502 / DSM 5159 / P-2).